A 261-amino-acid polypeptide reads, in one-letter code: 5'-nucleotidase SurE (261 aa).

4 residues coordinate a divalent metal cation: D8, D9, S43, and N96.

The protein belongs to the SurE nucleotidase family. A divalent metal cation is required as a cofactor.

Its subcellular location is the cytoplasm. The catalysed reaction is a ribonucleoside 5'-phosphate + H2O = a ribonucleoside + phosphate. In terms of biological role, nucleotidase that shows phosphatase activity on nucleoside 5'-monophosphates. The polypeptide is 5'-nucleotidase SurE (Cereibacter sphaeroides (strain KD131 / KCTC 12085) (Rhodobacter sphaeroides)).